The following is a 639-amino-acid chain: Chaperone protein DnaK (639 aa).

Threonine 198 bears the Phosphothreonine; by autocatalysis mark. Residues 603-618 (AKAQTQGGAQEGAAKQ) show a composition bias toward low complexity. Residues 603–639 (AKAQTQGGAQEGAAKQSNATADDVVDAEFEEVKDDKK) are disordered. Positions 625 to 639 (DVVDAEFEEVKDDKK) are enriched in acidic residues.

The protein belongs to the heat shock protein 70 family.

In terms of biological role, acts as a chaperone. The chain is Chaperone protein DnaK from Shewanella sp. (strain MR-7).